The following is a 244-amino-acid chain: tRNA (guanine-N(1)-)-methyltransferase (244 aa).

Residues G112 and 131–136 (IGDFIV) each bind S-adenosyl-L-methionine.

This sequence belongs to the RNA methyltransferase TrmD family. As to quaternary structure, homodimer.

Its subcellular location is the cytoplasm. The enzyme catalyses guanosine(37) in tRNA + S-adenosyl-L-methionine = N(1)-methylguanosine(37) in tRNA + S-adenosyl-L-homocysteine + H(+). Specifically methylates guanosine-37 in various tRNAs. In Clostridium kluyveri (strain NBRC 12016), this protein is tRNA (guanine-N(1)-)-methyltransferase.